The chain runs to 862 residues: Fork head protein homolog 2 (862 aa).

Residues 83 to 152 form the FHA domain; it reads VSIGRNTDPL…NGAKVNFQRT (70 aa). The fork-head DNA-binding region spans 339–430; the sequence is VKPPHSYATM…QQEFLNKWNT (92 aa). Disordered stretches follow at residues 498 to 528, 611 to 663, 698 to 730, and 750 to 846; these read PSKG…QEQR, SDSA…GTTT, PERG…LQTS, and ESNN…ANAK. A compositionally biased stretch (low complexity) spans 504–520; it reads PASQQSQPPVSHQNQSQ. Polar residues predominate over residues 611–644; the sequence is SDSADKSTNNNGGTKMNLPAISTSSLDENGNLEP. Over residues 645 to 655 the composition is skewed to low complexity; the sequence is TTTTSSGNSNS. Serine 708 is modified (phosphoserine). A compositionally biased stretch (low complexity) spans 712 to 726; it reads SNSNNTNNNGANNSN. Composition is skewed to polar residues over residues 750 to 770 and 778 to 788; these read ESNN…NVKS and LQFSSTNNTPA. Over residues 804–829 the composition is skewed to basic and acidic residues; sequence IKAKENENATSEKDSDSNSNDLETKD. The span at 830–844 shows a compositional bias: polar residues; that stretch reads INSSPLKNQGGSTAN. Serine 832 and serine 833 each carry phosphoserine.

Interacts with MCM1. Interacts with NDD1. Interacts with the origin recognition complex (ORC) composed of ORC1 to ORC6.

It is found in the nucleus. The protein localises to the cytoplasm. The protein resides in the cytosol. Functionally, transcription factor that regulates the expression of the CLB2 cluster of genes during the G2/M phase of the mitotic cell cycle. The CLB2 cluster of genes includes mitotic regulators such as CLB1, CLB2, CDC5 and CDC20 as well as SWI5 and ACE2, transcription factors required for the subsequent temporal wave of cell cycle regulated gene expression in the M/G1 phase interval. Involved in HMRa silencing. FKH1 and FKH2 associate with the coding regions of active genes and influence, in opposing ways, transcriptional elongation and termination, and coordinate early transcription elongation and pre-mRNA processing. Both FKH1 and FKH2 play a role as regulators of lifespan in collaboration with the anaphase-promoting complex (APC), likely through combined regulation of stress response, genomic stability, and cell cycle regulation. FKH1 and FKH2 function also in controlling yeast cell morphology by preventing preudohyphal growth. Acts as a rate-limiting replication origin activator via its interaction with the origin recognition complex (ORC). The chain is Fork head protein homolog 2 from Saccharomyces cerevisiae (strain ATCC 204508 / S288c) (Baker's yeast).